A 728-amino-acid chain; its full sequence is Catalase B (728 aa).

Catalysis depends on residues H107 and N180. Y394 is a binding site for heme.

This sequence belongs to the catalase family. Heme serves as cofactor.

The protein localises to the secreted. It catalyses the reaction 2 H2O2 = O2 + 2 H2O. In terms of biological role, occurs in almost all aerobically respiring organisms and serves to protect cells from the toxic effects of hydrogen peroxide. This Ajellomyces capsulatus (Darling's disease fungus) protein is Catalase B (CATB).